A 298-amino-acid chain; its full sequence is GTPase Era (298 aa).

Positions 3 to 170 constitute an Era-type G domain; sequence KSGFVAILGR…IKLLTDNLEE (168 aa). A G1 region spans residues 11–18; sequence GRPNVGKS. 11 to 18 serves as a coordination point for GTP; it reads GRPNVGKS. The tract at residues 37–41 is G2; sequence QTTRN. Positions 58 to 61 are G3; that stretch reads DTPG. GTP is bound by residues 58-62 and 120-123; these read DTPGI and NKID. The interval 120 to 123 is G4; it reads NKID. Residues 149–151 are G5; that stretch reads ISA. In terms of domain architecture, KH type-2 spans 201–279; the sequence is TQQEVPHSVA…YLETWVKVKK (79 aa).

It belongs to the TRAFAC class TrmE-Era-EngA-EngB-Septin-like GTPase superfamily. Era GTPase family. Monomer.

The protein localises to the cytoplasm. Its subcellular location is the cell membrane. Functionally, an essential GTPase that binds both GDP and GTP, with rapid nucleotide exchange. Plays a role in 16S rRNA processing and 30S ribosomal subunit biogenesis and possibly also in cell cycle regulation and energy metabolism. The chain is GTPase Era from Streptococcus pyogenes serotype M2 (strain MGAS10270).